Reading from the N-terminus, the 124-residue chain is Small ribosomal subunit protein bS6 (124 aa).

This sequence belongs to the bacterial ribosomal protein bS6 family.

Binds together with bS18 to 16S ribosomal RNA. The polypeptide is Small ribosomal subunit protein bS6 (Rippkaea orientalis (strain PCC 8801 / RF-1) (Cyanothece sp. (strain PCC 8801))).